The chain runs to 238 residues: Ribonuclease PH (238 aa).

Phosphate-binding positions include R86 and 124–126 (GTR).

It belongs to the RNase PH family. As to quaternary structure, homohexameric ring arranged as a trimer of dimers.

It catalyses the reaction tRNA(n+1) + phosphate = tRNA(n) + a ribonucleoside 5'-diphosphate. In terms of biological role, phosphorolytic 3'-5' exoribonuclease that plays an important role in tRNA 3'-end maturation. Removes nucleotide residues following the 3'-CCA terminus of tRNAs; can also add nucleotides to the ends of RNA molecules by using nucleoside diphosphates as substrates, but this may not be physiologically important. Probably plays a role in initiation of 16S rRNA degradation (leading to ribosome degradation) during starvation. The polypeptide is Ribonuclease PH (Serratia proteamaculans (strain 568)).